Here is a 571-residue protein sequence, read N- to C-terminus: Optineurin (571 aa).

2 disordered regions span residues methionine 1–leucine 32 and leucine 100–arginine 144. The stretch at glutamate 38–serine 170 forms a coiled coil. The interval methionine 58–threonine 209 is interaction with Rab8. 2 stretches are compositionally biased toward basic and acidic residues: residues leucine 100–glutamate 123 and arginine 130–leucine 143. The LIR motif lies at aspartate 176–isoleucine 181. Position 177 is a phosphoserine; by TBK1 (serine 177). Positions glycine 186–histidine 197 are enriched in basic and acidic residues. 2 disordered regions span residues glycine 186 to serine 210 and valine 255 to serine 291. Serine 198 bears the Phosphoserine mark. The segment covering proline 201–serine 210 has biased composition (polar residues). Positions cysteine 233 to aspartate 502 form a coiled coil. Basic and acidic residues-rich tracts occupy residues valine 255–isoleucine 268 and serine 275–proline 286. At serine 336 the chain carries Phosphoserine. An interaction with HD region spans residues threonine 405 to isoleucine 571. Positions arginine 406–arginine 514 are interaction with MYO6. Residues aspartate 468–arginine 473 carry the UBAN motif. Phosphoserine is present on serine 520. The CCHC NOA-type zinc finger occupies glutamine 541 to isoleucine 571. Cysteine 549, cysteine 552, histidine 565, and cysteine 569 together coordinate Zn(2+).

As to quaternary structure, self-associates. Interacts with HD. Interacts with GTF3A. Interacts with MYO6. Interacts (via UBAN) with ubiquitinated TFRC. Interacts with GTP-bound Rab8 (RAB8A and/or RAB8B). Interacts with TBC1D17. Interacts with TBK1. Interacts with TRAF3. Binds to linear ubiquitin chains. Interacts with LC3 family members MAP1LC3A, MAP1LC3B, GABARAP, GABARAPL1 and GABARAPL2; OPTN phosphorylation increases the association (at least with MAP1LC3B). Interacts with RAB12; the interaction may be indirect. Interacts with TBK1; this interaction leads to the Golgi localization of TBK1 and its subsequent activation. Interacts with palmitoyltransferase ZDHHC17/HIP14; the interaction does not lead to palmitoylation of OPTN. Interacts with CYLD. Interacts with TOM1; the interaction is indirect and is mediated by MYO6, which acts as a bridge between TOM1 and OPTN. Interacts with USP12; the interaction is independent of USP12 deubiquitinase activity and may be involved in regulation of autophagic flux. In terms of processing, phosphorylated by TBK1, leading to restrict bacterial proliferation in case of infection.

Its subcellular location is the cytoplasm. The protein localises to the perinuclear region. It localises to the golgi apparatus. The protein resides in the trans-Golgi network. It is found in the cytoplasmic vesicle. Its subcellular location is the autophagosome. The protein localises to the recycling endosome. Functionally, plays an important role in the maintenance of the Golgi complex, in membrane trafficking, in exocytosis, through its interaction with myosin VI and Rab8. Links myosin VI to the Golgi complex and plays an important role in Golgi ribbon formation. Negatively regulates the induction of IFNB in response to RNA virus infection. Plays a neuroprotective role in the eye and optic nerve. Probably part of the TNF-alpha signaling pathway that can shift the equilibrium toward induction of cell death. May act by regulating membrane trafficking and cellular morphogenesis via a complex that contains Rab8 and huntingtin (HD). Mediates the interaction of Rab8 with the probable GTPase-activating protein TBC1D17 during Rab8-mediated endocytic trafficking, such as that of transferrin receptor (TFRC/TfR); regulates Rab8 recruitment to tubules emanating from the endocytic recycling compartment. Autophagy receptor that interacts directly with both the cargo to become degraded and an autophagy modifier of the MAP1 LC3 family; targets ubiquitin-coated bacteria (xenophagy) and appears to function in the same pathway as SQSTM1 and CALCOCO2/NDP52. In Macaca fascicularis (Crab-eating macaque), this protein is Optineurin (OPTN).